Here is a 349-residue protein sequence, read N- to C-terminus: Lachesin (349 aa).

The N-terminal stretch at 1 to 18 is a signal peptide; sequence MDLRLYTIFVGFFSVVYA. Residues 22 to 127 enclose the Ig-like V-type domain; it reads PTISYISQEQ…NKITAEVDLQ (106 aa). Cys43 and Cys110 are joined by a disulfide. Ig-like C2-type domains lie at 132 to 218 and 222 to 315; these read PVIS…IAVE and PPVI…VELF. N-linked (GlcNAc...) asparagine glycosylation occurs at Asn137. Intrachain disulfides connect Cys154/Cys201 and Cys244/Cys299. A lipid anchor (GPI-anchor amidated glycine) is attached at Gly332. Residues 333–349 constitute a propeptide, removed in mature form; sequence DAAEISTSMALILISTI.

The N-terminus is blocked. As to expression, expressed by all neurogenic cells early, but only those cells that become neuroblasts continue to express it. Expressed by neuroblasts, ganglion mother cells and neurons early in their lives, but expression becomes restricted to a subset of neurons as development progresses. Expressed by sensory neurons as they delaminate from the body wall ectoderm. It is also present on growing axons of the CNS and PNS and becomes restricted to a subset of axons later in development.

It localises to the cell membrane. May play a role in early neuronal differentiation and axon outgrowth. The polypeptide is Lachesin (LAC) (Schistocerca americana (American grasshopper)).